A 431-amino-acid chain; its full sequence is 23S rRNA (uracil(1939)-C(5))-methyltransferase RlmD (431 aa).

In terms of domain architecture, TRAM spans Arg-10–Arg-68. Residues Cys-81, Cys-87, Cys-90, and Cys-161 each contribute to the [4Fe-4S] cluster site. Gln-264, Phe-293, Asn-298, Glu-314, Asn-341, and Asp-362 together coordinate S-adenosyl-L-methionine. The active-site Nucleophile is Cys-388.

It belongs to the class I-like SAM-binding methyltransferase superfamily. RNA M5U methyltransferase family. RlmD subfamily.

It carries out the reaction uridine(1939) in 23S rRNA + S-adenosyl-L-methionine = 5-methyluridine(1939) in 23S rRNA + S-adenosyl-L-homocysteine + H(+). Its function is as follows. Catalyzes the formation of 5-methyl-uridine at position 1939 (m5U1939) in 23S rRNA. The protein is 23S rRNA (uracil(1939)-C(5))-methyltransferase RlmD of Salmonella paratyphi A (strain ATCC 9150 / SARB42).